Reading from the N-terminus, the 282-residue chain is DNA processing protein DprA (282 aa).

This sequence belongs to the DprA/Smf family. As to quaternary structure, homodimer; forms tail-to-tail dimers, forms nucleoprotein complex (NPC) which requires at least 30 nucleotides (nt) of ssDNA becoming optimal with 50 nt. Interacts with RecA, forms mixed DprA-RecA-ssDNA filaments. Interacts with ComFA and ComFC.

It is found in the cytoplasm. In terms of biological role, protein that helps load RecA onto ssDNA during transformation. Required for DNA transformation. Not required for DNA uptake but for a later stage of transformation. Thought to interact at the cell pole with newly imported transforming ssDNA which it binds cooperatively, protecting linear and circular ssDNA from nuclease action. Forms bridges between DNA segments. Favors the loading of RecA onto ssDNA and formation of RecA-DNA filaments, triggering RecA-catalysis of ATP-driven homologous DNA pairing. In Streptococcus pneumoniae (strain ATCC BAA-255 / R6), this protein is DNA processing protein DprA.